A 247-amino-acid chain; its full sequence is Probable transcriptional regulatory protein Syncc9605_2132 (247 aa).

This sequence belongs to the TACO1 family.

It is found in the cytoplasm. The polypeptide is Probable transcriptional regulatory protein Syncc9605_2132 (Synechococcus sp. (strain CC9605)).